We begin with the raw amino-acid sequence, 480 residues long: Aspartyl/glutamyl-tRNA(Asn/Gln) amidotransferase subunit B (480 aa).

It belongs to the GatB/GatE family. GatB subfamily. Heterotrimer of A, B and C subunits.

The enzyme catalyses L-glutamyl-tRNA(Gln) + L-glutamine + ATP + H2O = L-glutaminyl-tRNA(Gln) + L-glutamate + ADP + phosphate + H(+). The catalysed reaction is L-aspartyl-tRNA(Asn) + L-glutamine + ATP + H2O = L-asparaginyl-tRNA(Asn) + L-glutamate + ADP + phosphate + 2 H(+). In terms of biological role, allows the formation of correctly charged Asn-tRNA(Asn) or Gln-tRNA(Gln) through the transamidation of misacylated Asp-tRNA(Asn) or Glu-tRNA(Gln) in organisms which lack either or both of asparaginyl-tRNA or glutaminyl-tRNA synthetases. The reaction takes place in the presence of glutamine and ATP through an activated phospho-Asp-tRNA(Asn) or phospho-Glu-tRNA(Gln). The chain is Aspartyl/glutamyl-tRNA(Asn/Gln) amidotransferase subunit B from Streptococcus agalactiae serotype Ia (strain ATCC 27591 / A909 / CDC SS700).